Here is a 157-residue protein sequence, read N- to C-terminus: MSYNITSSNQYQYFAAMWAEPQAMLNQCVSALSQSYQTQAARDTVRQQFSNLLSAIVTPNQRFPESGYRVYINSAVLKPLYEALMKSFDTRNRIIETEEESRPSASEVANATQRVDDATVAIRSQIQLLLNELSNGHGLMNRAEFEVLLPWTTAPAT.

S2 carries the post-translational modification N-acetylserine; by host.

Belongs to the virgaviridae capsid protein family.

The protein localises to the virion. In terms of biological role, capsid protein self-assembles to form rod-shaped virions about 18 nm in diameter with a central canal enclosing the viral genomic RNA. This Digitalis lanata (Grecian foxglove) protein is Capsid protein (CP).